A 170-amino-acid polypeptide reads, in one-letter code: ATP synthase subunit b (170 aa).

A helical membrane pass occupies residues 20–42 (QLLAMLVLLALLKKFALGPLLNI).

Belongs to the ATPase B chain family. As to quaternary structure, F-type ATPases have 2 components, F(1) - the catalytic core - and F(0) - the membrane proton channel. F(1) has five subunits: alpha(3), beta(3), gamma(1), delta(1), epsilon(1). F(0) has three main subunits: a(1), b(2) and c(10-14). The alpha and beta chains form an alternating ring which encloses part of the gamma chain. F(1) is attached to F(0) by a central stalk formed by the gamma and epsilon chains, while a peripheral stalk is formed by the delta and b chains.

The protein localises to the cell membrane. F(1)F(0) ATP synthase produces ATP from ADP in the presence of a proton or sodium gradient. F-type ATPases consist of two structural domains, F(1) containing the extramembraneous catalytic core and F(0) containing the membrane proton channel, linked together by a central stalk and a peripheral stalk. During catalysis, ATP synthesis in the catalytic domain of F(1) is coupled via a rotary mechanism of the central stalk subunits to proton translocation. Its function is as follows. Component of the F(0) channel, it forms part of the peripheral stalk, linking F(1) to F(0). In Bacillus velezensis (strain DSM 23117 / BGSC 10A6 / LMG 26770 / FZB42) (Bacillus amyloliquefaciens subsp. plantarum), this protein is ATP synthase subunit b.